The sequence spans 304 residues: DCN1-like protein 3 (304 aa).

Disordered regions lie at residues 1-86 and 284-304; these read MGQC…AEES and EGEGRGALSSGPEGLCPEEQT. Residue G2 is the site of N-myristoyl glycine attachment. Positions 86-278 constitute a DCUN1 domain; that stretch reads SSLQRLEELF…LFDTFVEWEM (193 aa).

As to quaternary structure, part of a complex containing DCUN1D3, CUL3 and RBX1. Interacts (via the DCUN1 domain) with the unneddylated cullins: interacts with CUL1, CUL2, CUL3, CUL4A, CUL4B and CUL5; these interactions promote the cullin neddylation and the identity of the cullin dictates the affinity of the interaction. Interacts preferentially with CUL3; this interaction triggers the relocalization of CUL3 to the cell membrane where CUL3 is neddylated. Interacts (via DCUN1 domain) with RBX1. May also interact with regulators or subunits of cullin-RING ligases such as RNF7, ELOB and DDB1; these interactions are bridged by cullins. Interacts (via DCUN1 domain) with CAND1; this interaction is bridged by cullins and strongly inhibits cullin neddylation. These CAND-cullin-DCNL complexes can only be neddylated in the presence of a substrate adapter. Interacts (via DCUN1 domain) with the N-terminally acetylated form of UBE2M and UBE2F. In terms of tissue distribution, tends to be down-regulated in different type of cancers, including lung neuroendocrine carcinoma, thyroid Huerthle cell carcinoma and lung squamous cell carcinoma. Mostly expressed in testis and brain. Highly expressed in liver, bladder and renal normal tissue than their tumor tissue counterparts. Palmitoylation stabilizes DCUN1D3 at the cell membrane.

It localises to the cell membrane. The protein resides in the cytoplasm. Its subcellular location is the nucleus. It is found in the perinuclear region. Functionally, contributes to the neddylation of all cullins by transferring NEDD8 from N-terminally acetylated NEDD8-conjugating E2s enzyme to different cullin C-terminal domain-RBX complexes and may play a role in the cell cycle progression by regulating the SCF ubiquitin E3 ligase complex, after UV damage. At the cell membrane, can promote and as well inhibit cullins neddylation. The sequence is that of DCN1-like protein 3 from Homo sapiens (Human).